Here is a 388-residue protein sequence, read N- to C-terminus: Transposase for insertion sequence element IS406 (388 aa).

This sequence belongs to the transposase mutator family.

Functionally, required for the transposition of the insertion element. This chain is Transposase for insertion sequence element IS406, found in Burkholderia multivorans (strain ATCC 17616 / 249).